The chain runs to 248 residues: Tropomyosin alpha-4 chain (248 aa).

Position 2 is an N-acetylalanine (Ala2). Positions 2–248 form a coiled coil; that stretch reads AGLNSLEAVK…DQTLDELNCI (247 aa). Ser6 carries the post-translational modification Phosphoserine. Positions 16–47 are disordered; it reads ALQQQADEAEDRAQGLQRELDGERERREKAEG. Residues 33–47 are compositionally biased toward basic and acidic residues; that stretch reads RELDGERERREKAEG. Lys177 and Lys215 each carry N6-acetyllysine. Phosphothreonine is present on Thr216.

It belongs to the tropomyosin family. As to quaternary structure, homodimer. Heterodimer of an alpha (TPM1, TPM3 or TPM4) and a beta (TPM2) chain.

It is found in the cytoplasm. Its subcellular location is the cytoskeleton. Functionally, binds to actin filaments in muscle and non-muscle cells. Plays a central role, in association with the troponin complex, in the calcium dependent regulation of vertebrate striated muscle contraction. Smooth muscle contraction is regulated by interaction with caldesmon. In non-muscle cells is implicated in stabilizing cytoskeleton actin filaments. Binds calcium. The sequence is that of Tropomyosin alpha-4 chain (TPM4) from Equus caballus (Horse).